The sequence spans 148 residues: Glutamyl-tRNA(Gln) amidotransferase subunit C, mitochondrial (148 aa).

Belongs to the GatC family. As to quaternary structure, subunit of the heterotrimeric GatCAB amidotransferase (AdT) complex, composed of A, B and C subunits.

Its subcellular location is the mitochondrion. It carries out the reaction L-glutamyl-tRNA(Gln) + L-glutamine + ATP + H2O = L-glutaminyl-tRNA(Gln) + L-glutamate + ADP + phosphate + H(+). Functionally, allows the formation of correctly charged Gln-tRNA(Gln) through the transamidation of misacylated Glu-tRNA(Gln) in the mitochondria. The reaction takes place in the presence of glutamine and ATP through an activated gamma-phospho-Glu-tRNA(Gln). This chain is Glutamyl-tRNA(Gln) amidotransferase subunit C, mitochondrial, found in Drosophila melanogaster (Fruit fly).